A 620-amino-acid polypeptide reads, in one-letter code: Chaperone protein HscA homolog (620 aa).

Belongs to the heat shock protein 70 family.

In terms of biological role, chaperone involved in the maturation of iron-sulfur cluster-containing proteins. Has a low intrinsic ATPase activity which is markedly stimulated by HscB. In Shewanella baltica (strain OS155 / ATCC BAA-1091), this protein is Chaperone protein HscA homolog.